A 162-amino-acid chain; its full sequence is Blue copper protein 1b (162 aa).

Positions 1 to 23 (MASSRVVLILSISMVLLSSVAIA) are cleaved as a signal peptide. One can recognise a Phytocyanin domain in the interval 25–125 (TDYIVGDDKG…QMKLVITVLA (101 aa)). Cu cation is bound at residue His65. N-linked (GlcNAc...) asparagine glycosylation occurs at Asn71. The cysteines at positions 78 and 112 are disulfide-linked. Cu cation is bound by residues Cys106, His111, and Met117. A helical membrane pass occupies residues 142–162 (VVSSLFGVVMAIMVAIAVIFA).

The protein resides in the membrane. The protein is Blue copper protein 1b of Medicago truncatula (Barrel medic).